A 1232-amino-acid polypeptide reads, in one-letter code: Anion exchange protein 3 (1232 aa).

The span at 1-11 (MANGVIPPPGG) shows a compositional bias: pro residues. 2 disordered regions span residues 1–316 (MANG…KLDR) and 429–499 (NDDK…DSHR). Residues 1–708 (MANGVIPPPG…DLRDALHSQC (708 aa)) lie on the Cytoplasmic side of the membrane. Positions 58–75 (DPEKPSRSYSERDFEFHR) are enriched in basic and acidic residues. Basic residues-rich tracts occupy residues 76 to 97 (HTSH…KLRR) and 104 to 113 (RHTRRKRKKE). The span at 134-152 (VDEEEEEEEEEEGESEAEP) shows a compositional bias: acidic residues. Phosphoserine is present on residues Ser-167, Ser-170, Ser-175, and Ser-198. The segment covering 267–279 (DDMKSHRLEDNPG) has biased composition (basic and acidic residues). Positions 280-289 (VRRHLVKKPS) are enriched in basic residues. Arg-295 is modified (omega-N-methylarginine). Residues 305-316 (LRRKKKKKKLDR) are compositionally biased toward basic residues. The span at 440–450 (NPSSSSMNSVL) shows a compositional bias: polar residues. Basic and acidic residues predominate over residues 481–499 (HDPDAKEKPLHMPGGDSHR). Transmembrane regions (helical) follow at residues 709–731 (VAAV…GLLG), 737–774 (LMGV…LLVF), 794–816 (VWVG…SFLV), 826–847 (IFAF…YKVF), and 893–910 (ALLS…AFFL). The interval 709-1232 (VAAVLFIYFA…DEYNELHMPV (524 aa)) is membrane (anion exchange). At 911–925 (RKFRNSRFLGGKARR) the chain is on the cytoplasmic side. 5 helical membrane passes run 926 to 946 (IIGD…DYSI), 980 to 1002 (PFPP…LIFM), 1028 to 1049 (LLLI…LTAA), 1083 to 1128 (VTGV…IQLS), and 1155 to 1191 (MHLF…TVPL). The S-palmitoyl cysteine moiety is linked to residue Cys-1165.

Belongs to the anion exchanger (TC 2.A.31) family.

Its subcellular location is the cell membrane. It carries out the reaction hydrogencarbonate(in) + chloride(out) = hydrogencarbonate(out) + chloride(in). Functionally, sodium-independent anion exchanger which mediates the electroneutral exchange of chloride for bicarbonate ions across the cell membrane. May be involved in the regulation of intracellular pH, and the modulation of cardiac action potential. This chain is Anion exchange protein 3 (SLC4A3), found in Plecturocebus moloch (Dusky titi monkey).